Consider the following 321-residue polypeptide: o-succinylbenzoate synthase (321 aa).

Catalysis depends on Lys110, which acts as the Proton donor. Asp138, Glu165, and Asp188 together coordinate Mg(2+). The Proton acceptor role is filled by Lys212.

This sequence belongs to the mandelate racemase/muconate lactonizing enzyme family. MenC type 1 subfamily. The cofactor is a divalent metal cation.

It catalyses the reaction (1R,6R)-6-hydroxy-2-succinyl-cyclohexa-2,4-diene-1-carboxylate = 2-succinylbenzoate + H2O. It functions in the pathway quinol/quinone metabolism; 1,4-dihydroxy-2-naphthoate biosynthesis; 1,4-dihydroxy-2-naphthoate from chorismate: step 4/7. Its pathway is quinol/quinone metabolism; menaquinone biosynthesis. Functionally, converts 2-succinyl-6-hydroxy-2,4-cyclohexadiene-1-carboxylate (SHCHC) to 2-succinylbenzoate (OSB). The sequence is that of o-succinylbenzoate synthase from Mycolicibacterium smegmatis (strain ATCC 700084 / mc(2)155) (Mycobacterium smegmatis).